Reading from the N-terminus, the 185-residue chain is Ribosome-recycling factor (185 aa).

This sequence belongs to the RRF family.

It localises to the cytoplasm. Its function is as follows. Responsible for the release of ribosomes from messenger RNA at the termination of protein biosynthesis. May increase the efficiency of translation by recycling ribosomes from one round of translation to another. The sequence is that of Ribosome-recycling factor from Shouchella clausii (strain KSM-K16) (Alkalihalobacillus clausii).